We begin with the raw amino-acid sequence, 392 residues long: Queuine tRNA-ribosyltransferase (392 aa).

D93 acts as the Proton acceptor in catalysis. Residues 93 to 97 (DSGGY), D147, Q189, and G216 contribute to the substrate site. An RNA binding region spans residues 247 to 253 (GVGAPED). Catalysis depends on D266, which acts as the Nucleophile. Positions 271–275 (TRVAR) are RNA binding; important for wobble base 34 recognition. Residues C304, C306, C309, and H335 each contribute to the Zn(2+) site.

It belongs to the queuine tRNA-ribosyltransferase family. As to quaternary structure, homodimer. Within each dimer, one monomer is responsible for RNA recognition and catalysis, while the other monomer binds to the replacement base PreQ1. It depends on Zn(2+) as a cofactor.

The catalysed reaction is 7-aminomethyl-7-carbaguanine + guanosine(34) in tRNA = 7-aminomethyl-7-carbaguanosine(34) in tRNA + guanine. The protein operates within tRNA modification; tRNA-queuosine biosynthesis. Its function is as follows. Catalyzes the base-exchange of a guanine (G) residue with the queuine precursor 7-aminomethyl-7-deazaguanine (PreQ1) at position 34 (anticodon wobble position) in tRNAs with GU(N) anticodons (tRNA-Asp, -Asn, -His and -Tyr). Catalysis occurs through a double-displacement mechanism. The nucleophile active site attacks the C1' of nucleotide 34 to detach the guanine base from the RNA, forming a covalent enzyme-RNA intermediate. The proton acceptor active site deprotonates the incoming PreQ1, allowing a nucleophilic attack on the C1' of the ribose to form the product. After dissociation, two additional enzymatic reactions on the tRNA convert PreQ1 to queuine (Q), resulting in the hypermodified nucleoside queuosine (7-(((4,5-cis-dihydroxy-2-cyclopenten-1-yl)amino)methyl)-7-deazaguanosine). The polypeptide is Queuine tRNA-ribosyltransferase (Dehalococcoides mccartyi (strain ATCC BAA-2266 / KCTC 15142 / 195) (Dehalococcoides ethenogenes (strain 195))).